A 200-amino-acid chain; its full sequence is Dephospho-CoA kinase (200 aa).

The DPCK domain maps to 6–200; that stretch reads AIALSGGIAT…KIKAKYLEKK (195 aa). An ATP-binding site is contributed by 14–19; it reads ATGKST.

It belongs to the CoaE family.

The protein resides in the cytoplasm. The enzyme catalyses 3'-dephospho-CoA + ATP = ADP + CoA + H(+). It participates in cofactor biosynthesis; coenzyme A biosynthesis; CoA from (R)-pantothenate: step 5/5. Functionally, catalyzes the phosphorylation of the 3'-hydroxyl group of dephosphocoenzyme A to form coenzyme A. This is Dephospho-CoA kinase from Sulfurimonas denitrificans (strain ATCC 33889 / DSM 1251) (Thiomicrospira denitrificans (strain ATCC 33889 / DSM 1251)).